Consider the following 591-residue polypeptide: Formate--tetrahydrofolate ligase (591 aa).

74 to 81 (TPLGEGKS) contributes to the ATP binding site.

It belongs to the formate--tetrahydrofolate ligase family.

It catalyses the reaction (6S)-5,6,7,8-tetrahydrofolate + formate + ATP = (6R)-10-formyltetrahydrofolate + ADP + phosphate. The protein operates within one-carbon metabolism; tetrahydrofolate interconversion. The polypeptide is Formate--tetrahydrofolate ligase (Desulfovibrio desulfuricans (strain ATCC 27774 / DSM 6949 / MB)).